Here is a 500-residue protein sequence, read N- to C-terminus: Cytochrome P450 CYP736A12 (500 aa).

A helical transmembrane segment spans residues 4-24 (LAYPLLFVLLGALSWWILPII). Cys-442 lines the heme pocket.

It belongs to the cytochrome P450 family. The cofactor is heme.

Its subcellular location is the membrane. Probable heme-thiolate monooxygenase. The sequence is that of Cytochrome P450 CYP736A12 from Panax ginseng (Korean ginseng).